The primary structure comprises 352 residues: Cellular tumor antigen p53 (352 aa).

The tract at residues 1–48 (MDPVPDLPESQGSFQELWETVSYPPLETLSLPTVNEPTGSWVATGDMF) is transcription activation (acidic). Residues 87–273 (DYPGSYELEL…KTEEESRQKT (187 aa)) mediate DNA binding. Cys161, His164, Cys220, and Cys224 together coordinate Zn(2+). Residues 254-261 (RICACPGR) form an interaction with DNA region. Over residues 262 to 271 (DRKTEEESRQ) the composition is skewed to basic and acidic residues. The segment at 262–303 (DRKTEEESRQKTQPKKRKVTPNTSSSKRKKSHSSGEEEDNRE) is disordered. A Bipartite nuclear localization signal motif is present at residues 276–291 (KKRKVTPNTSSSKRKK). The tract at residues 302 to 331 (REVFHFEVYGRERYEFLKKINDGLELLEKE) is oligomerization. The Nuclear export signal motif lies at 316 to 327 (EFLKKINDGLEL). The disordered stretch occupies residues 330-352 (KESKSKNKDSGMVPSSGKKLKSN). A basic (repression of DNA-binding) region spans residues 334 to 350 (SKNKDSGMVPSSGKKLK). At Ser351 the chain carries Phosphoserine.

This sequence belongs to the p53 family. As to quaternary structure, binds DNA as a homotetramer. Requires Zn(2+) as cofactor.

Its subcellular location is the cytoplasm. The protein localises to the nucleus. Its function is as follows. Multifunctional transcription factor that induces cell cycle arrest, DNA repair or apoptosis upon binding to its target DNA sequence. Acts as a tumor suppressor in many tumor types; induces growth arrest or apoptosis depending on the physiological circumstances and cell type. Negatively regulates cell division by controlling expression of a set of genes required for this process. One of the activated genes is an inhibitor of cyclin-dependent kinases. Apoptosis induction seems to be mediated either by stimulation of BAX and FAS antigen expression, or by repression of Bcl-2 expression. This chain is Cellular tumor antigen p53 (tp53), found in Oryzias latipes (Japanese rice fish).